A 182-amino-acid polypeptide reads, in one-letter code: Nucleosome assembly protein 1-like 5 (182 aa).

Residues 1 to 71 form a disordered region; the sequence is MADSENQGPA…APKPKNDFIE (71 aa). Low complexity-rich tracts occupy residues 7 to 21 and 28 to 49; these read QGPAEPSQAAAAAEA and AEGGAQGGDCDSAAGDPDSAAG. Residues 81–107 adopt a coiled-coil conformation; sequence VLALKKLQKRCDKIEAKFDKEFQALEK. Residues 134 to 182 are disordered; sequence LEGEEEEEEEYEDDEEEGEDEEEEEAAAEAAAGAKHDDAHAEMPDDAKK. Over residues 135-160 the composition is skewed to acidic residues; the sequence is EGEEEEEEEYEDDEEEGEDEEEEEAA. Residues 167–182 show a composition bias toward basic and acidic residues; that stretch reads AKHDDAHAEMPDDAKK.

The protein belongs to the nucleosome assembly protein (NAP) family. As to expression, predominantly expressed in brain.

The protein localises to the nucleus. This Homo sapiens (Human) protein is Nucleosome assembly protein 1-like 5 (NAP1L5).